Consider the following 623-residue polypeptide: Indolepyruvate oxidoreductase subunit IorA (623 aa).

Cys-573, Cys-576, Cys-579, Cys-585, Cys-602, Cys-605, Cys-608, and Cys-612 together coordinate [4Fe-4S] cluster. Positions 593–622 constitute a 4Fe-4S ferredoxin-type domain; that stretch reads EKVSIDQSLCVGCAVCAKICPNRAIKPAKS.

In terms of assembly, heterodimer of the IorA and IorB subunits. The cofactor is [4Fe-4S] cluster.

The catalysed reaction is indole-3-pyruvate + 2 oxidized [2Fe-2S]-[ferredoxin] + CoA = (indol-3-yl)acetyl-CoA + 2 reduced [2Fe-2S]-[ferredoxin] + CO2 + H(+). Catalyzes the ferredoxin-dependent oxidative decarboxylation of arylpyruvates. The chain is Indolepyruvate oxidoreductase subunit IorA (iorA) from Archaeoglobus fulgidus (strain ATCC 49558 / DSM 4304 / JCM 9628 / NBRC 100126 / VC-16).